A 70-amino-acid chain; its full sequence is Small, acid-soluble spore protein I (70 aa).

This sequence belongs to the SspI family.

The protein localises to the spore core. This Bacillus licheniformis (strain ATCC 14580 / DSM 13 / JCM 2505 / CCUG 7422 / NBRC 12200 / NCIMB 9375 / NCTC 10341 / NRRL NRS-1264 / Gibson 46) protein is Small, acid-soluble spore protein I.